Here is a 365-residue protein sequence, read N- to C-terminus: LIM and cysteine-rich domains protein 1 (365 aa).

The residue at position 16 (Ser16) is a Phosphoserine. The region spanning 99 to 206 is the PET domain; the sequence is MIMTNPIATG…GEVALPGQGG (108 aa). A disordered region spans residues 200 to 235; that stretch reads ALPGQGGLPKEEGKQQEKPEGAETTAATTNGSLSDP. Positions 208–220 are enriched in basic and acidic residues; the sequence is PKEEGKQQEKPEG. LIM zinc-binding domains lie at 241-306 and 307-365; these read YVCE…SLRP and RCSG…SKRS.

As to quaternary structure, interacts with GATA1 and GATA4. Interacts with beta-dystroglycan. Interacts with GATA6. In terms of tissue distribution, expressed in the heart (at protein level). Expressed in many tissues with highest abundance in skeletal muscle.

It is found in the cytoplasm. The protein localises to the nucleus. Its function is as follows. Transcriptional cofactor that restricts GATA6 function by inhibiting DNA-binding, resulting in repression of GATA6 transcriptional activation of downstream target genes. Represses GATA6-mediated trans activation of lung- and cardiac tissue-specific promoters. Inhibits DNA-binding by GATA4 and GATA1 to the cTNC promoter. Plays a critical role in the development of cardiac hypertrophy via activation of calcineurin/nuclear factor of activated T-cells signaling pathway. This is LIM and cysteine-rich domains protein 1 (LMCD1) from Homo sapiens (Human).